The primary structure comprises 210 residues: Selenoprotein T2 (210 aa).

The first 21 residues, 1-21, serve as a signal peptide directing secretion; the sequence is MAEYSQTGILTALLLFTVVTV. The segment at residues 62–65 is a cross-link (cysteinyl-selenocysteine (Cys-Sec)); that stretch reads CISU. Position 65 (U65) is a non-standard amino acid, selenocysteine.

The protein belongs to the SelWTH family. Selenoprotein T subfamily. Post-translationally, may contain a selenide-sulfide bond between Cys-62 and Sec-65. This bond is speculated to serve as redox-active pair. As to expression, widely expressed in the embryo.

The protein is Selenoprotein T2 of Danio rerio (Zebrafish).